The following is a 529-amino-acid chain: Cytochrome P450 monooxygenase atmQ (529 aa).

2 consecutive transmembrane segments (helical) span residues 22-42 (YPFA…QQLA) and 51-71 (SWVN…IAAF). Residue Cys467 coordinates heme.

It belongs to the cytochrome P450 family. Heme serves as cofactor.

The protein localises to the membrane. It participates in secondary metabolite biosynthesis. Functionally, cytochrome P450 monooxygenase; part of the ATM2 gene cluster that mediates the biosynthesis of aflatrem, a tremorgenic mycotoxin with acute neurotoxic effects. Synthesis of geranylgeranyl diphosphate (GGPP) by AtmG (a GGPP synthase) precedes condensation of GGPP with indole 3-glycerol phosphate, followed by epoxidation and cyclization by AtmM (a FAD-dependent monooxygenase) and AtmC (a prenyltransferase) to produce paspaline. AtmB is also essential for paspaline production, but its exact role has not been identified yet. AtmP, a cytochrome P450 monooxygenase, subsequently converts paspaline to 13-desoxypaxilline via PC-M6 by removal of the C-30 methyl group and oxidation at C-10. AtmQ, a cytochrome P450 monooxygenase, then catalyzes the oxidation of 13-desoxypaxilline, first at C-7 to produce paspalicine and then at C-13 to form paspalinine. Finally, AtmD prenylates paspalinine to form aflatrem. The protein is Cytochrome P450 monooxygenase atmQ of Aspergillus flavus.